The following is a 346-amino-acid chain: Arsenite methyltransferase (346 aa).

Belongs to the methyltransferase superfamily. Arsenite methyltransferase family.

It carries out the reaction arsenic triglutathione + [thioredoxin]-dithiol + S-adenosyl-L-methionine + 2 H2O = methylarsonous acid + [thioredoxin]-disulfide + 3 glutathione + S-adenosyl-L-homocysteine + H(+). It catalyses the reaction arsenic triglutathione + 2 [thioredoxin]-dithiol + 2 S-adenosyl-L-methionine + H2O = dimethylarsinous acid + 2 [thioredoxin]-disulfide + 3 glutathione + 2 S-adenosyl-L-homocysteine + 2 H(+). The enzyme catalyses arsenic triglutathione + 3 [thioredoxin]-dithiol + 3 S-adenosyl-L-methionine = trimethylarsine + 3 [thioredoxin]-disulfide + 3 glutathione + 3 S-adenosyl-L-homocysteine + 3 H(+). In terms of biological role, catalyzes the transfer of a methyl group from AdoMet to arsenite, producing methylated arsenicals. Involved in the conversion of As(III) to dimethylarsenate as the main product in the medium and also produces dimethylarsine and trimethylarsine gases. Reduces the arsenic toxicity in the cell and may contribute to the global arsenic cycling. The protein is Arsenite methyltransferase of Aquipseudomonas alcaligenes (strain ATCC 14909 / DSM 50342 / CCUG 1425 / JCM 20561 / NBRC 14159 / NCIMB 9945 / NCTC 10367 / 1577) (Pseudomonas alcaligenes).